The chain runs to 263 residues: Acyl-[acyl-carrier-protein]--UDP-N-acetylglucosamine O-acyltransferase (263 aa).

The protein belongs to the transferase hexapeptide repeat family. LpxA subfamily. As to quaternary structure, homotrimer.

It is found in the cytoplasm. The catalysed reaction is a (3R)-hydroxyacyl-[ACP] + UDP-N-acetyl-alpha-D-glucosamine = a UDP-3-O-[(3R)-3-hydroxyacyl]-N-acetyl-alpha-D-glucosamine + holo-[ACP]. Its pathway is glycolipid biosynthesis; lipid IV(A) biosynthesis; lipid IV(A) from (3R)-3-hydroxytetradecanoyl-[acyl-carrier-protein] and UDP-N-acetyl-alpha-D-glucosamine: step 1/6. Its function is as follows. Involved in the biosynthesis of lipid A, a phosphorylated glycolipid that anchors the lipopolysaccharide to the outer membrane of the cell. In Xanthomonas euvesicatoria pv. vesicatoria (strain 85-10) (Xanthomonas campestris pv. vesicatoria), this protein is Acyl-[acyl-carrier-protein]--UDP-N-acetylglucosamine O-acyltransferase.